The chain runs to 446 residues: Maltoporin (446 aa).

A signal peptide spans 1 to 25; that stretch reads MMITLRKLPLAVAVAAGVMSAQAMA.

It belongs to the porin LamB (TC 1.B.3) family. As to quaternary structure, homotrimer formed of three 18-stranded antiparallel beta-barrels, containing three independent channels.

The protein resides in the cell outer membrane. It carries out the reaction beta-maltose(in) = beta-maltose(out). Involved in the transport of maltose and maltodextrins. The chain is Maltoporin from Escherichia coli O157:H7 (strain EC4115 / EHEC).